A 100-amino-acid chain; its full sequence is Phosphoribosyl-ATP pyrophosphatase (100 aa).

It belongs to the PRA-PH family.

It localises to the cytoplasm. It catalyses the reaction 1-(5-phospho-beta-D-ribosyl)-ATP + H2O = 1-(5-phospho-beta-D-ribosyl)-5'-AMP + diphosphate + H(+). It participates in amino-acid biosynthesis; L-histidine biosynthesis; L-histidine from 5-phospho-alpha-D-ribose 1-diphosphate: step 2/9. This chain is Phosphoribosyl-ATP pyrophosphatase, found in Haloquadratum walsbyi (strain DSM 16790 / HBSQ001).